Reading from the N-terminus, the 238-residue chain is Ribonuclease 3 (238 aa).

The region spanning 10–139 (FKQFQEQTGI…FIGALYLDQG (130 aa)) is the RNase III domain. Mg(2+) is bound at residue Glu52. Asp56 is an active-site residue. Mg(2+) is bound by residues Asp125 and Glu128. Residue Glu128 is part of the active site. A DRBM domain is found at 165 to 234 (DYKSQLQEFV…AQMALAKLKQ (70 aa)).

This sequence belongs to the ribonuclease III family. As to quaternary structure, homodimer. The cofactor is Mg(2+).

It is found in the cytoplasm. The enzyme catalyses Endonucleolytic cleavage to 5'-phosphomonoester.. Its function is as follows. Digests double-stranded RNA. Involved in the processing of primary rRNA transcript to yield the immediate precursors to the large and small rRNAs (23S and 16S). Processes some mRNAs, and tRNAs when they are encoded in the rRNA operon. Processes pre-crRNA and tracrRNA of type II CRISPR loci if present in the organism. This chain is Ribonuclease 3, found in Anoxybacillus flavithermus (strain DSM 21510 / WK1).